Here is a 165-residue protein sequence, read N- to C-terminus: 6,7-dimethyl-8-ribityllumazine synthase 2 (165 aa).

Residues Trp24, 56 to 58 (SFE), and 80 to 82 (LVV) each bind 5-amino-6-(D-ribitylamino)uracil. Arg88 serves as the catalytic Proton donor. Ser113 lines the 5-amino-6-(D-ribitylamino)uracil pocket. His127 provides a ligand contact to (2S)-2-hydroxy-3-oxobutyl phosphate.

It belongs to the DMRL synthase family.

It carries out the reaction (2S)-2-hydroxy-3-oxobutyl phosphate + 5-amino-6-(D-ribitylamino)uracil = 6,7-dimethyl-8-(1-D-ribityl)lumazine + phosphate + 2 H2O + H(+). The protein operates within cofactor biosynthesis; riboflavin biosynthesis; riboflavin from 2-hydroxy-3-oxobutyl phosphate and 5-amino-6-(D-ribitylamino)uracil: step 1/2. Its function is as follows. Catalyzes the formation of 6,7-dimethyl-8-ribityllumazine by condensation of 5-amino-6-(D-ribitylamino)uracil with 3,4-dihydroxy-2-butanone 4-phosphate. This is the penultimate step in the biosynthesis of riboflavin. The chain is 6,7-dimethyl-8-ribityllumazine synthase 2 from Bradyrhizobium diazoefficiens (strain JCM 10833 / BCRC 13528 / IAM 13628 / NBRC 14792 / USDA 110).